The sequence spans 922 residues: Lysine-specific demethylase 4 (922 aa).

Positions 1–15 (MASAATTTHFPSSRI) are enriched in polar residues. Disordered stretches follow at residues 1–21 (MASAATTTHFPSSRIPSEPCA) and 42–61 (SSSCHVENDSRPLSPTMFTD). The region spanning 87–130 (VLTFYPTMREFKNFSQYIKKIEQNGGHLKAGIAKIVAPEGWTPR) is the JmjN domain. A 2-oxoglutarate-binding site is contributed by Y213. One can recognise a JmjC domain in the interval 223-388 (DAQVEEWNMN…YGKDAVLCDC (166 aa)). Fe cation is bound by residues H265 and E267. N275 and K283 together coordinate 2-oxoglutarate. Zn(2+) contacts are provided by C314 and H320. K321 is a binding site for 2-oxoglutarate. H356 is a Fe cation binding site. Residues C386 and C388 each coordinate Zn(2+). The disordered stretch occupies residues 435 to 475 (KRRQSLADASKIAKRARLGASSTATDSDGSSGSSGSEEATE). Residues 453–475 (GASSTATDSDGSSGSSGSEEATE) are compositionally biased toward low complexity. A C2HC pre-PHD-type zinc finger spans residues 639–675 (TTSCQLCELRGGALIPCQIGTDSTWAHVACALFNRRA). The PHD-type; degenerate zinc-finger motif lies at 723-783 (WECVVCHRTD…GVVMICHKHE (61 aa)).

The protein belongs to the JHDM3 histone demethylase family. It depends on Fe(2+) as a cofactor.

It localises to the nucleus. It carries out the reaction N(6),N(6),N(6)-trimethyl-L-lysyl(9)-[histone H3] + 2 2-oxoglutarate + 2 O2 = N(6)-methyl-L-lysyl(9)-[histone H3] + 2 formaldehyde + 2 succinate + 2 CO2. The enzyme catalyses N(6),N(6),N(6)-trimethyl-L-lysyl(36)-[histone H3] + 2 2-oxoglutarate + 2 O2 = N(6)-methyl-L-lysyl(36)-[histone H3] + 2 formaldehyde + 2 succinate + 2 CO2. Histone demethylase that specifically demethylates 'Lys-9' and 'Lys-36' residues of histone H3, thereby playing a central role in histone code. Demethylation of Lys residue generates formaldehyde and succinate. Involved in the negative regulation of lifespan in a germline-dependent fashion. This Caenorhabditis elegans protein is Lysine-specific demethylase 4 (jmjd-2).